The primary structure comprises 336 residues: Dihydroorotate dehydrogenase (quinone) (336 aa).

Residues 62–66 (AGLDK) and Thr86 contribute to the FMN site. Lys66 is a binding site for substrate. 111 to 115 (NRMGF) lines the substrate pocket. Asn139 and Asn172 together coordinate FMN. Asn172 provides a ligand contact to substrate. The active-site Nucleophile is Ser175. Residue Asn177 participates in substrate binding. FMN-binding residues include Lys217 and Thr245. 246 to 247 (NT) provides a ligand contact to substrate. Residues Gly268, Gly297, and 318-319 (YS) contribute to the FMN site.

Belongs to the dihydroorotate dehydrogenase family. Type 2 subfamily. In terms of assembly, monomer. FMN is required as a cofactor.

It is found in the cell membrane. It carries out the reaction (S)-dihydroorotate + a quinone = orotate + a quinol. The protein operates within pyrimidine metabolism; UMP biosynthesis via de novo pathway; orotate from (S)-dihydroorotate (quinone route): step 1/1. Its function is as follows. Catalyzes the conversion of dihydroorotate to orotate with quinone as electron acceptor. This Proteus mirabilis (strain HI4320) protein is Dihydroorotate dehydrogenase (quinone).